A 118-amino-acid chain; its full sequence is NADH-quinone oxidoreductase subunit A (118 aa).

3 consecutive transmembrane segments (helical) span residues 5–25 (YAFIGIFALAAITFPLLPLVL), 62–82 (LYALAFVIFDIETVFLYPWAV), and 87–107 (LGLFALFEMVVFLAILTIGLV).

The protein belongs to the complex I subunit 3 family. NDH-1 is composed of 14 different subunits. Subunits NuoA, H, J, K, L, M, N constitute the membrane sector of the complex.

The protein resides in the cell membrane. It catalyses the reaction a quinone + NADH + 5 H(+)(in) = a quinol + NAD(+) + 4 H(+)(out). In terms of biological role, NDH-1 shuttles electrons from NADH, via FMN and iron-sulfur (Fe-S) centers, to quinones in the respiratory chain. The immediate electron acceptor for the enzyme in this species is believed to be ubiquinone. Couples the redox reaction to proton translocation (for every two electrons transferred, four hydrogen ions are translocated across the cytoplasmic membrane), and thus conserves the redox energy in a proton gradient. This chain is NADH-quinone oxidoreductase subunit A, found in Herpetosiphon aurantiacus (strain ATCC 23779 / DSM 785 / 114-95).